An 894-amino-acid polypeptide reads, in one-letter code: Protein translocase subunit SecA (894 aa).

ATP-binding positions include Q87, 105-109 (GEGKT), and D512. Positions 857–894 (FNLGDEPEAQQPVTSKKVGRNEPCPCGSGKKYKQCCGK) are disordered. Positions 880, 882, 891, and 892 each coordinate Zn(2+).

The protein belongs to the SecA family. Monomer and homodimer. Part of the essential Sec protein translocation apparatus which comprises SecA, SecYEG and auxiliary proteins SecDF-YajC and YidC. Zn(2+) is required as a cofactor.

The protein localises to the cell inner membrane. The protein resides in the cytoplasm. It catalyses the reaction ATP + H2O + cellular proteinSide 1 = ADP + phosphate + cellular proteinSide 2.. In terms of biological role, part of the Sec protein translocase complex. Interacts with the SecYEG preprotein conducting channel. Has a central role in coupling the hydrolysis of ATP to the transfer of proteins into and across the cell membrane, serving as an ATP-driven molecular motor driving the stepwise translocation of polypeptide chains across the membrane. The polypeptide is Protein translocase subunit SecA (Geotalea uraniireducens (strain Rf4) (Geobacter uraniireducens)).